The chain runs to 150 residues: Snaclec bothrojaracin subunit beta (150 aa).

The first 23 residues, 1–23 (MGRFIFVSFGLLVVFLSLSGTAA), serve as a signal peptide directing secretion. 3 disulfides stabilise this stretch: Cys-25/Cys-36, Cys-53/Cys-146, and Cys-123/Cys-138. One can recognise a C-type lectin domain in the interval 32–147 (YEGSCYRVFE…CTKLEYFVCE (116 aa)).

The protein belongs to the snaclec family. As to quaternary structure, heterodimer of subunits alpha and beta; disulfide-linked. In terms of tissue distribution, expressed by the venom gland.

The protein resides in the secreted. Its function is as follows. This potent antithrombotic agent acts in a calcium-independent manner. Exerts its anticoagulant effect by two distinct mechanisms. It binds to activated thrombin through exosite 1, blocking fibrinogen clotting, platelet activation, factor V activation and other effects, and it interacts with prothrombin (F2), decreasing its proteolytic activation -especially in the presence of factor Va. In vivo, intravenous injection before thrombosis induction causes a significant decrease in thrombus weight. Furthermore, BJC shows a prolonged effect by remaining in the plasma bound to prothrombin for at least 12 hours. The sequence is that of Snaclec bothrojaracin subunit beta from Bothrops jararaca (Jararaca).